Here is a 258-residue protein sequence, read N- to C-terminus: Small ribosomal subunit protein mS40 (258 aa).

Residues 1–35 (MAASILNVLLRRLPGVSPFRGAYGVQVLLQTLCTK) constitute a mitochondrion transit peptide. Residue serine 49 is modified to Phosphoserine. Residues 223-258 (RLREESGPPPELMPEVPLTAPAEASSTEPGAPQSAL) are disordered.

It belongs to the bacterial ribosomal protein bS18 family. Mitochondrion-specific ribosomal protein mS40 subfamily. Component of the mitochondrial ribosome small subunit (28S) which comprises a 12S rRNA and about 30 distinct proteins.

It is found in the mitochondrion. This Sus scrofa (Pig) protein is Small ribosomal subunit protein mS40 (MRPS18B).